We begin with the raw amino-acid sequence, 551 residues long: PA-phosphatase related-family protein DDB_G0268928 (551 aa).

2 stretches are compositionally biased toward polar residues: residues 26–47 and 137–152; these read TESL…SGKD and KYNT…SSNK. Disordered regions lie at residues 26-50 and 123-172; these read TESL…DYSS and KGED…NNNN. Residues 153–171 show a composition bias toward low complexity; sequence TQTTVLNNSTTSSNNINNN. The next 7 membrane-spanning stretches (helical) occupy residues 211-231, 232-252, 273-293, 346-366, 393-413, 474-494, and 500-520; these read SYSD…SIIY, SLLV…LVFI, LAVG…AVVL, ILQL…IYIL, MFIC…LIFP, ILPA…IATM, and YFVD…YGGF.

The protein belongs to the PA-phosphatase related phosphoesterase family.

It is found in the membrane. This is PA-phosphatase related-family protein DDB_G0268928 from Dictyostelium discoideum (Social amoeba).